The chain runs to 297 residues: 4-hydroxy-tetrahydrodipicolinate synthase (297 aa).

T45 lines the pyruvate pocket. Y133 functions as the Proton donor/acceptor in the catalytic mechanism. The Schiff-base intermediate with substrate role is filled by K161. Residue I205 participates in pyruvate binding.

Belongs to the DapA family. In terms of assembly, homotetramer; dimer of dimers.

The protein localises to the cytoplasm. It carries out the reaction L-aspartate 4-semialdehyde + pyruvate = (2S,4S)-4-hydroxy-2,3,4,5-tetrahydrodipicolinate + H2O + H(+). It participates in amino-acid biosynthesis; L-lysine biosynthesis via DAP pathway; (S)-tetrahydrodipicolinate from L-aspartate: step 3/4. In terms of biological role, catalyzes the condensation of (S)-aspartate-beta-semialdehyde [(S)-ASA] and pyruvate to 4-hydroxy-tetrahydrodipicolinate (HTPA). The polypeptide is 4-hydroxy-tetrahydrodipicolinate synthase (Dichelobacter nodosus (strain VCS1703A)).